The primary structure comprises 774 residues: Beta-D-xylosidase 1 (774 aa).

The N-terminal stretch at 1–30 (MSCYNKALLIGNKVVVILVFLLCLVHSSES) is a signal peptide. N-linked (GlcNAc...) asparagine glycosylation is present at N131. D296 is an active-site residue. N658 is a glycosylation site (N-linked (GlcNAc...) asparagine).

The protein belongs to the glycosyl hydrolase 3 family. Expressed in leaves, stems, seedlings, roots, inflorescences, siliques and developing seeds. Expressed in the vasculature of the roots, leaves, flowers and silique. Expressed in tissues undergoing secondary cell wall thickening such as protoxylem, metaxylem, intrafascicular cambium and fibers.

The protein resides in the secreted. It is found in the extracellular space. It localises to the extracellular matrix. It catalyses the reaction Hydrolysis of terminal non-reducing alpha-L-arabinofuranoside residues in alpha-L-arabinosides.. In terms of biological role, involved in pectic arabinan modification in mucilage secretory cells. Also acts as a beta-D-xylosidase during the remodeling of xylans in vascular development. This chain is Beta-D-xylosidase 1 (BXL1), found in Arabidopsis thaliana (Mouse-ear cress).